Reading from the N-terminus, the 118-residue chain is Protein BEX4 (118 aa).

The tract at residues valine 14 to arginine 50 is disordered. Basic and acidic residues predominate over residues lysine 28–lysine 44. Residues serine 30–alanine 88 form an interaction with SIRT2 region. An interaction with alpha-tubulin region spans residues serine 30–proline 118. Cysteine 115 is a binding site for Zn(2+).

Belongs to the BEX family. As to quaternary structure, interacts with alpha-tubulin. Interacts with SIRT2. In terms of processing, ubiquitinated and degraded by the proteasome.

It is found in the cytoplasm. Its subcellular location is the cytoskeleton. The protein localises to the spindle pole. It localises to the nucleus. May play a role in microtubule deacetylation by negatively regulating the SIRT2 deacetylase activity toward alpha-tubulin and thereby participate in the control of cell cycle progression and genomic stability. In absence of reductive stress, acts as a pseudosubstrate for the CRL2(FEM1B) complex: associates with FEM1B via zinc, thereby preventing association between FEM1B and its substrates. In Rattus norvegicus (Rat), this protein is Protein BEX4.